The sequence spans 346 residues: Tetraacyldisaccharide 4'-kinase (346 aa).

62-69 provides a ligand contact to ATP; the sequence is TAGGTGKT.

It belongs to the LpxK family.

The catalysed reaction is a lipid A disaccharide + ATP = a lipid IVA + ADP + H(+). It participates in glycolipid biosynthesis; lipid IV(A) biosynthesis; lipid IV(A) from (3R)-3-hydroxytetradecanoyl-[acyl-carrier-protein] and UDP-N-acetyl-alpha-D-glucosamine: step 6/6. Transfers the gamma-phosphate of ATP to the 4'-position of a tetraacyldisaccharide 1-phosphate intermediate (termed DS-1-P) to form tetraacyldisaccharide 1,4'-bis-phosphate (lipid IVA). In Xanthomonas oryzae pv. oryzae (strain MAFF 311018), this protein is Tetraacyldisaccharide 4'-kinase.